A 365-amino-acid chain; its full sequence is S-adenosylmethionine decarboxylase proenzyme (365 aa).

Active-site residues include Glu31 and Glu34. The Schiff-base intermediate with substrate; via pyruvic acid role is filled by Ser87. Ser87 carries the pyruvic acid (Ser); by autocatalysis modification. The Proton donor; for catalytic activity role is filled by Cys101. Catalysis depends on proton acceptor; for processing activity residues Ser248 and His263.

Belongs to the eukaryotic AdoMetDC family. In terms of assembly, heterotetramer of two alpha and two beta chains. Pyruvate serves as cofactor. In terms of processing, is synthesized initially as an inactive proenzyme. Formation of the active enzyme involves a self-maturation process in which the active site pyruvoyl group is generated from an internal serine residue via an autocatalytic post-translational modification. Two non-identical subunits are generated from the proenzyme in this reaction, and the pyruvate is formed at the N-terminus of the alpha chain, which is derived from the carboxyl end of the proenzyme. The post-translation cleavage follows an unusual pathway, termed non-hydrolytic serinolysis, in which the side chain hydroxyl group of the serine supplies its oxygen atom to form the C-terminus of the beta chain, while the remainder of the serine residue undergoes an oxidative deamination to produce ammonia and the pyruvoyl group blocking the N-terminus of the alpha chain.

The catalysed reaction is S-adenosyl-L-methionine + H(+) = S-adenosyl 3-(methylsulfanyl)propylamine + CO2. It functions in the pathway amine and polyamine biosynthesis; S-adenosylmethioninamine biosynthesis; S-adenosylmethioninamine from S-adenosyl-L-methionine: step 1/1. The chain is S-adenosylmethionine decarboxylase proenzyme (smd-1) from Onchocerca volvulus.